The primary structure comprises 144 residues: Transcriptional regulator SlyA (144 aa).

The HTH marR-type domain maps to 2–135 (ESPLGSDLAR…LLHLIRKLEQ (134 aa)). The segment at residues 49–72 (QIQLAKAIGIEQPSLVRTLDQLEE) is a DNA-binding region (H-T-H motif).

It belongs to the SlyA family. Homodimer.

In terms of biological role, transcription regulator that can specifically activate or repress expression of target genes. This Klebsiella pneumoniae (strain 342) protein is Transcriptional regulator SlyA.